Consider the following 600-residue polypeptide: Putative acetyltransferase MPN_114 (600 aa).

Histidine 323 serves as the catalytic Proton acceptor. 396-409 (TKPLIKAKGIKNSE) is a CoA binding site.

This sequence belongs to the carnitine/choline acetyltransferase family.

The chain is Putative acetyltransferase MPN_114 from Mycoplasma pneumoniae (strain ATCC 29342 / M129 / Subtype 1) (Mycoplasmoides pneumoniae).